A 435-amino-acid polypeptide reads, in one-letter code: Manganese transport system membrane protein MntC (435 aa).

A run of 9 helical transmembrane segments spans residues 17 to 37 (VLAGTLLLGTASGVLGSFVLL), 42 to 62 (LIGDAMAHSALPGVCLAFLFT), 68 to 88 (PFFLLGAALAGLLGTFCIQLI), 98 to 118 (SAIGIVLSVFFGVGIILLTYI), 143 to 163 (QDIILIAGISAVLLLLCIVFF), 166 to 186 (FTLITFDLAFAKGLGIPVRFL), 189 to 209 (LLACLIVCAVVIGLQTVGVIL), 228 to 248 (LTGMIIIAGITGGVSGVAGTL), and 255 to 275 (GMATGPLMILSATLLFLFSMI).

It belongs to the ABC-3 integral membrane protein family. As to quaternary structure, the complex is probably composed of two ATP-binding proteins (MntB), two transmembrane proteins (MntC and MntD) and a solute-binding protein (MntA).

The protein resides in the cell membrane. Its function is as follows. Probably part of the ABC transporter complex MntABCD involved in manganese import. Probably responsible for the translocation of the substrate across the membrane. The sequence is that of Manganese transport system membrane protein MntC from Bacillus subtilis (strain 168).